The chain runs to 148 residues: Protein ADM2 (148 aa).

A signal peptide spans methionine 1–serine 24. A propeptide spanning residues arginine 25 to proline 98 is cleaved from the precursor. 2 disordered regions span residues serine 26–proline 57 and arginine 70–threonine 101. Cysteine 110 and cysteine 115 are oxidised to a cystine. Tyrosine 147 bears the Tyrosine amide mark.

It belongs to the adrenomedullin family. Expressed in the esophagus, stomach, jejunum, ileum, ileocecum, ascending colon, transverse colon, descending colon and rectum. Expressed in myocardial cells of the heart, renal tubular cells, hypothalamus, and pituitary.

It localises to the secreted. In terms of biological role, intermedin/ADM2 is a peptide hormone that plays a role as physiological regulator of gastrointestinal and cardiovascular bioactivities mediated by the CALCRL-RAMPs receptor complexes. Activates the cAMP-dependent pathway through interaction with CALCRL-RAMP3 receptor complex. This chain is Protein ADM2, found in Homo sapiens (Human).